We begin with the raw amino-acid sequence, 319 residues long: Pantothenate kinase (319 aa).

Position 96–103 (96–103) interacts with ATP; the sequence is GSVAVGKS.

It belongs to the prokaryotic pantothenate kinase family.

Its subcellular location is the cytoplasm. It carries out the reaction (R)-pantothenate + ATP = (R)-4'-phosphopantothenate + ADP + H(+). Its pathway is cofactor biosynthesis; coenzyme A biosynthesis; CoA from (R)-pantothenate: step 1/5. This Bacillus subtilis (strain 168) protein is Pantothenate kinase (coaA).